The following is an 88-amino-acid chain: Exodeoxyribonuclease 7 small subunit (88 aa).

The interval 68–88 is disordered; it reads SDPMHPDDGEPFDPSLVSTSQ.

It belongs to the XseB family. As to quaternary structure, heterooligomer composed of large and small subunits.

The protein resides in the cytoplasm. It carries out the reaction Exonucleolytic cleavage in either 5'- to 3'- or 3'- to 5'-direction to yield nucleoside 5'-phosphates.. Its function is as follows. Bidirectionally degrades single-stranded DNA into large acid-insoluble oligonucleotides, which are then degraded further into small acid-soluble oligonucleotides. In Xylella fastidiosa (strain 9a5c), this protein is Exodeoxyribonuclease 7 small subunit.